The primary structure comprises 125 residues: Apolipoprotein C-IV (125 aa).

The first 27 residues, 1-27, serve as a signal peptide directing secretion; sequence MSLLRHSLQALPALCLCVLVLACIGAC.

The protein belongs to the apolipoprotein C4 family.

It is found in the secreted. May participate in lipoprotein metabolism. This is Apolipoprotein C-IV (APOC4) from Ateles geoffroyi (Black-handed spider monkey).